The chain runs to 159 residues: Trafficking protein particle complex subunit 6A (159 aa).

Serine 33 is modified (phosphoserine).

It belongs to the TRAPP small subunits family. BET3 subfamily. Part of the multisubunit transport protein particle (TRAPP) complex. Heterodimer with TRAPPC3. The heterodimer TRAPPC3-TRAPPC6A interacts with TRAPPC2L. Interacts with TRAPPC2L.

It localises to the golgi apparatus. The protein localises to the cis-Golgi network. It is found in the endoplasmic reticulum. In terms of biological role, may play a role in vesicular transport during the biogenesis of melanosomes. This Bos taurus (Bovine) protein is Trafficking protein particle complex subunit 6A.